The chain runs to 201 residues: uncharacterized protein (201 aa).

The first 19 residues, 1 to 19 (MKLIVSVFLIGCQFLNILG), serve as a signal peptide directing secretion.

This is an uncharacterized protein from Acheta domesticus (House cricket).